A 291-amino-acid chain; its full sequence is ATP synthase gamma chain (291 aa).

Belongs to the ATPase gamma chain family. As to quaternary structure, F-type ATPases have 2 components, CF(1) - the catalytic core - and CF(0) - the membrane proton channel. CF(1) has five subunits: alpha(3), beta(3), gamma(1), delta(1), epsilon(1). CF(0) has three main subunits: a, b and c.

The protein resides in the cell inner membrane. In terms of biological role, produces ATP from ADP in the presence of a proton gradient across the membrane. The gamma chain is believed to be important in regulating ATPase activity and the flow of protons through the CF(0) complex. This chain is ATP synthase gamma chain, found in Nitratidesulfovibrio vulgaris (strain ATCC 29579 / DSM 644 / CCUG 34227 / NCIMB 8303 / VKM B-1760 / Hildenborough) (Desulfovibrio vulgaris).